A 224-amino-acid chain; its full sequence is Large ribosomal subunit protein uL1 (224 aa).

Belongs to the universal ribosomal protein uL1 family. Part of the 50S ribosomal subunit.

Binds directly to 23S rRNA. The L1 stalk is quite mobile in the ribosome, and is involved in E site tRNA release. In terms of biological role, protein L1 is also a translational repressor protein, it controls the translation of the L11 operon by binding to its mRNA. The polypeptide is Large ribosomal subunit protein uL1 (Borrelia duttonii (strain Ly)).